We begin with the raw amino-acid sequence, 310 residues long: Ribosomal RNA small subunit methyltransferase H (310 aa).

S-adenosyl-L-methionine is bound by residues G32–H34, D52, F79, D100, and Q107.

This sequence belongs to the methyltransferase superfamily. RsmH family.

The protein localises to the cytoplasm. The enzyme catalyses cytidine(1402) in 16S rRNA + S-adenosyl-L-methionine = N(4)-methylcytidine(1402) in 16S rRNA + S-adenosyl-L-homocysteine + H(+). In terms of biological role, specifically methylates the N4 position of cytidine in position 1402 (C1402) of 16S rRNA. This is Ribosomal RNA small subunit methyltransferase H from Bacillus cereus (strain ATCC 10987 / NRS 248).